A 334-amino-acid chain; its full sequence is Aspartate carbamoyltransferase catalytic subunit (334 aa).

Positions 70 and 71 each coordinate carbamoyl phosphate. Lys-98 is an L-aspartate binding site. Carbamoyl phosphate-binding residues include Arg-120, His-150, and Gln-153. L-aspartate contacts are provided by Arg-183 and Arg-239. Gly-280 and Pro-281 together coordinate carbamoyl phosphate.

This sequence belongs to the aspartate/ornithine carbamoyltransferase superfamily. ATCase family. In terms of assembly, heterododecamer (2C3:3R2) of six catalytic PyrB chains organized as two trimers (C3), and six regulatory PyrI chains organized as three dimers (R2).

It catalyses the reaction carbamoyl phosphate + L-aspartate = N-carbamoyl-L-aspartate + phosphate + H(+). Its pathway is pyrimidine metabolism; UMP biosynthesis via de novo pathway; (S)-dihydroorotate from bicarbonate: step 2/3. In terms of biological role, catalyzes the condensation of carbamoyl phosphate and aspartate to form carbamoyl aspartate and inorganic phosphate, the committed step in the de novo pyrimidine nucleotide biosynthesis pathway. The chain is Aspartate carbamoyltransferase catalytic subunit from Pseudomonas aeruginosa (strain LESB58).